The chain runs to 97 residues: RNA-binding protein Hfq (97 aa).

In terms of domain architecture, Sm spans 10 to 70 (DPFLNALRKE…ISTIVPARSV (61 aa)). Residues 75-97 (ENRPQAAPASTLVQVETVQQPAE) form a disordered region. Residues 85–97 (TLVQVETVQQPAE) show a composition bias toward polar residues.

Belongs to the Hfq family. As to quaternary structure, homohexamer.

RNA chaperone that binds small regulatory RNA (sRNAs) and mRNAs to facilitate mRNA translational regulation in response to envelope stress, environmental stress and changes in metabolite concentrations. Also binds with high specificity to tRNAs. The polypeptide is RNA-binding protein Hfq (Neisseria meningitidis serogroup C / serotype 2a (strain ATCC 700532 / DSM 15464 / FAM18)).